The primary structure comprises 132 residues: Large ribosomal subunit protein uL14 (132 aa).

It belongs to the universal ribosomal protein uL14 family. As to quaternary structure, part of the 50S ribosomal subunit. Forms a cluster with proteins L3 and L24e, part of which may contact the 16S rRNA in 2 intersubunit bridges.

In terms of biological role, binds to 23S rRNA. Forms part of two intersubunit bridges in the 70S ribosome. This chain is Large ribosomal subunit protein uL14, found in Methanococcus maripaludis (strain DSM 14266 / JCM 13030 / NBRC 101832 / S2 / LL).